We begin with the raw amino-acid sequence, 156 residues long: Large ribosomal subunit protein uL23 (156 aa).

Over residues 1 to 19 (MAPKAKKEAPAPPKVEAKA) the composition is skewed to basic and acidic residues. Residues 1 to 67 (MAPKAKKEAP…PKYPRKSAPR (67 aa)) are disordered. The residue at position 2 (A2) is a N,N,N-trimethylalanine. A Glycyl lysine isopeptide (Lys-Gly) (interchain with G-Cter in SUMO2) cross-link involves residue K14. The segment covering 20 to 67 (KALKAKKAVLKGVHSHKKKKIRTSPTFRRPKTLRLRRQPKYPRKSAPR) has biased composition (basic residues). A beta-like import receptor binding (BIB) domain region spans residues 32–74 (VHSHKKKKIRTSPTFRRPKTLRLRRQPKYPRKSAPRRNKLDHY). R41 carries the post-translational modification Citrulline. The residue at position 43 (S43) is a Phosphoserine. The residue at position 45 (T45) is a Phosphothreonine. K70 carries the post-translational modification N6-acetyllysine.

Belongs to the universal ribosomal protein uL23 family. As to quaternary structure, component of the large ribosomal subunit. Interacts with LYAR and GNL2. Interacts with MDM2; this interaction may promote MDM2-mediated p53/TP53 polyubiquitination. Directly interacts (via BIB domain) with IPO5, IPO7, KPNB1 and TNPO1; these interactions are involved in RPL23A nuclear import for the assembly of ribosomal subunits. Interacts with IPO8. In terms of processing, N-terminus is methylated by METTL11A/NTM1. Citrullinated by PADI4.

Its subcellular location is the cytoplasm. It localises to the nucleus. In terms of biological role, component of the large ribosomal subunit. The ribosome is a large ribonucleoprotein complex responsible for the synthesis of proteins in the cell. Binds a specific region on the 26S rRNA. May promote p53/TP53 degradation possibly through the stimulation of MDM2-mediated TP53 polyubiquitination. The sequence is that of Large ribosomal subunit protein uL23 (RPL23A) from Oryctolagus cuniculus (Rabbit).